We begin with the raw amino-acid sequence, 273 residues long: Mannose 6-phosphate receptor-like protein 1 (273 aa).

Positions 1–24 (MPTQLQRPLARLLALALLVLLARA) are cleaved as a signal peptide. The Lumenal segment spans residues 25–176 (AEDEPPFCAV…AAARAAGDRS (152 aa)). In terms of domain architecture, MRH spans 30 to 168 (PFCAVRNRST…EVRSVHACAA (139 aa)). 3 disulfides stabilise this stretch: cysteine 32–cysteine 75, cysteine 120–cysteine 154, and cysteine 135–cysteine 166. Asparagine 36, asparagine 51, asparagine 69, and asparagine 153 each carry an N-linked (GlcNAc...) asparagine glycan. The helical transmembrane segment at 177–194 (VLGIFAAILLVFAAVELA) threads the bilayer. The Cytoplasmic portion of the chain corresponds to 195–273 (RRCCAAPLRR…DSLDVRSSGA (79 aa)).

This sequence belongs to the MRL1/IGF2R family.

It is found in the golgi apparatus. Its subcellular location is the trans-Golgi network membrane. It localises to the endosome membrane. Functionally, sorting receptor involved in the transport of vacuolar enzymes from the Golgi complex to the vacuole. This Eremothecium gossypii (strain ATCC 10895 / CBS 109.51 / FGSC 9923 / NRRL Y-1056) (Yeast) protein is Mannose 6-phosphate receptor-like protein 1 (MRL1).